Reading from the N-terminus, the 339-residue chain is 7,8-didemethyl-8-hydroxy-5-deazariboflavin synthase (339 aa).

The Radical SAM core domain occupies 13-258; it reads ITYSKNIFIP…RDTDVSIQVP (246 aa). Cysteine 27, cysteine 31, and cysteine 34 together coordinate [4Fe-4S] cluster.

This sequence belongs to the radical SAM superfamily. CofG family. In terms of assembly, consists of two subunits, CofG and CofH. [4Fe-4S] cluster is required as a cofactor.

The catalysed reaction is 5-amino-5-(4-hydroxybenzyl)-6-(D-ribitylimino)-5,6-dihydrouracil + S-adenosyl-L-methionine = 7,8-didemethyl-8-hydroxy-5-deazariboflavin + 5'-deoxyadenosine + L-methionine + NH4(+) + H(+). The protein operates within cofactor biosynthesis; coenzyme F0 biosynthesis. Its function is as follows. Catalyzes the radical-mediated synthesis of 7,8-didemethyl-8-hydroxy-5-deazariboflavin from 5-amino-5-(4-hydroxybenzyl)-6-(D-ribitylimino)-5,6-dihydrouracil. In Methanobrevibacter smithii (strain ATCC 35061 / DSM 861 / OCM 144 / PS), this protein is 7,8-didemethyl-8-hydroxy-5-deazariboflavin synthase.